The chain runs to 248 residues: 23S rRNA (guanosine-2'-O-)-methyltransferase RlmB (248 aa).

S-adenosyl-L-methionine contacts are provided by Gly200, Ile220, and Leu229.

The protein belongs to the class IV-like SAM-binding methyltransferase superfamily. RNA methyltransferase TrmH family. RlmB subfamily.

It is found in the cytoplasm. It catalyses the reaction guanosine(2251) in 23S rRNA + S-adenosyl-L-methionine = 2'-O-methylguanosine(2251) in 23S rRNA + S-adenosyl-L-homocysteine + H(+). Specifically methylates the ribose of guanosine 2251 in 23S rRNA. The sequence is that of 23S rRNA (guanosine-2'-O-)-methyltransferase RlmB from Acinetobacter baylyi (strain ATCC 33305 / BD413 / ADP1).